The chain runs to 396 residues: ATP phosphoribosyltransferase regulatory subunit (396 aa).

The protein belongs to the class-II aminoacyl-tRNA synthetase family. HisZ subfamily. In terms of assembly, heteromultimer composed of HisG and HisZ subunits.

It is found in the cytoplasm. It functions in the pathway amino-acid biosynthesis; L-histidine biosynthesis; L-histidine from 5-phospho-alpha-D-ribose 1-diphosphate: step 1/9. Its function is as follows. Required for the first step of histidine biosynthesis. May allow the feedback regulation of ATP phosphoribosyltransferase activity by histidine. The sequence is that of ATP phosphoribosyltransferase regulatory subunit from Alkaliphilus metalliredigens (strain QYMF).